We begin with the raw amino-acid sequence, 262 residues long: MPAELSPIDTAKFAAARRAVDLVQDGMKLGLGTGSTAAWMVRCLAERVREEGLRVQGVPTSTRTAELARALGIQVVTLDEAKWLDLTIDGADEFDADFNLIKGGGAALLQEKIVATASDRMVVIADAAKEVAHLGAFPLPVEVIPFGWQSTKMLIEETLEGMDVLGREVTLRLSGDAPLLTDEKNYILDLHLKRIGEPRPLALALNQIAGVVENGLFIDICDTVVVGHGDGRVSLRDLQSGQAEEGSIDMDRARNIFADLGD.

Substrate is bound by residues 33-36 (TGST), 89-92 (DGAD), and 102-105 (KGGG). Catalysis depends on glutamate 111, which acts as the Proton acceptor. Residue lysine 129 coordinates substrate.

It belongs to the ribose 5-phosphate isomerase family. In terms of assembly, homodimer.

The enzyme catalyses aldehydo-D-ribose 5-phosphate = D-ribulose 5-phosphate. The protein operates within carbohydrate degradation; pentose phosphate pathway; D-ribose 5-phosphate from D-ribulose 5-phosphate (non-oxidative stage): step 1/1. Its function is as follows. Catalyzes the reversible conversion of ribose-5-phosphate to ribulose 5-phosphate. The sequence is that of Ribose-5-phosphate isomerase A from Cereibacter sphaeroides (strain ATCC 17023 / DSM 158 / JCM 6121 / CCUG 31486 / LMG 2827 / NBRC 12203 / NCIMB 8253 / ATH 2.4.1.) (Rhodobacter sphaeroides).